The chain runs to 442 residues: tRNA modification GTPase MnmE (442 aa).

Positions 27, 84, and 124 each coordinate (6S)-5-formyl-5,6,7,8-tetrahydrofolate. The TrmE-type G domain occupies 221–366; it reads GLHVVIVGAP…LLDALQAFAE (146 aa). Residues 231–236, 250–256, and 275–278 each bind GTP; these read NAGKSS, SEEAGTT, and DTAG. Mg(2+)-binding residues include serine 235 and threonine 256. Lysine 442 is a (6S)-5-formyl-5,6,7,8-tetrahydrofolate binding site.

It belongs to the TRAFAC class TrmE-Era-EngA-EngB-Septin-like GTPase superfamily. TrmE GTPase family. In terms of assembly, homodimer. Heterotetramer of two MnmE and two MnmG subunits. The cofactor is K(+).

Its subcellular location is the cytoplasm. Exhibits a very high intrinsic GTPase hydrolysis rate. Involved in the addition of a carboxymethylaminomethyl (cmnm) group at the wobble position (U34) of certain tRNAs, forming tRNA-cmnm(5)s(2)U34. This chain is tRNA modification GTPase MnmE, found in Brucella melitensis biotype 1 (strain ATCC 23456 / CCUG 17765 / NCTC 10094 / 16M).